The sequence spans 119 residues: Circadian clock oscillator protein KaiB (119 aa).

The protein belongs to the KaiB family. In terms of assembly, may undergo a major conformational rearrangment; in the free state forms homooligomers. When bound to KaiC switches to a monomeric thioredoxin-fold (KaiB(fs)). The active oscillator complex is probably KaiC(6):KaiB(6).

In terms of biological role, component of the KaiBC clock protein complex, which constitutes the main circadian regulator in cyanobacteria; it may modify the ATPase activity of KaiC. Functionally, may be a metamorphic protein which reversibly switches between an inactive tetrameric fold and a rare, thioredoxin-like monomeric fold (KaiB(fs)). KaiB(fs) binds phospho-KaiC, and perhaps clock output effectors. The polypeptide is Circadian clock oscillator protein KaiB (Prochlorococcus marinus (strain MIT 9313)).